Reading from the N-terminus, the 207-residue chain is Keratin-associated protein 27-1 (207 aa).

The tract at residues 184-207 (QLLESSPGVEPTCCVTGGSQLPSK) is disordered.

This sequence belongs to the PMG family. In terms of assembly, interacts with hair keratins.

In the hair cortex, hair keratin intermediate filaments are embedded in an interfilamentous matrix, consisting of hair keratin-associated proteins (KRTAP), which are essential for the formation of a rigid and resistant hair shaft through their extensive disulfide bond cross-linking with abundant cysteine residues of hair keratins. The matrix proteins include the high-sulfur and high-glycine-tyrosine keratins. This is Keratin-associated protein 27-1 (KRTAP27-1) from Homo sapiens (Human).